A 645-amino-acid chain; its full sequence is Aspartate--tRNA ligase, mitochondrial (645 aa).

A mitochondrion-targeting transit peptide spans 1 to 47 (MYFPSWLSQLYRGLSRPIRRTTQPIWGSLYRSLLQSSQRRIPEFSSF). Thr219 is modified (phosphothreonine). Position 242 is a phosphoserine (Ser242). Positions 244 to 247 (QQFK) are aspartate. Residue Arg266 coordinates L-aspartate. 266-268 (RDE) serves as a coordination point for ATP. Lys382 carries the post-translational modification N6-acetyllysine. Residue Glu535 participates in ATP binding. Residue Arg542 participates in L-aspartate binding. 584–587 (GLDR) is a binding site for ATP.

The protein belongs to the class-II aminoacyl-tRNA synthetase family. Type 1 subfamily. Homodimer.

The protein resides in the mitochondrion matrix. Its subcellular location is the mitochondrion membrane. The enzyme catalyses tRNA(Asp) + L-aspartate + ATP = L-aspartyl-tRNA(Asp) + AMP + diphosphate. Functionally, catalyzes the attachment of aspartate to tRNA(Asp) in a two-step reaction: aspartate is first activated by ATP to form Asp-AMP and then transferred to the acceptor end of tRNA(Asp). This chain is Aspartate--tRNA ligase, mitochondrial (DARS2), found in Homo sapiens (Human).